A 32-amino-acid polypeptide reads, in one-letter code: Kappa-theraphotoxin-Gr2b (32 aa).

3 disulfide bridges follow: cysteine 2–cysteine 16, cysteine 9–cysteine 21, and cysteine 15–cysteine 25.

Belongs to the neurotoxin 30 (phrixotoxin) family. As to expression, expressed by the venom gland.

Its subcellular location is the secreted. In terms of biological role, binds the voltage-sensor domain of the potassium channel KvAP (from the archaeon Aeropyrum pernix) and affects channel gating. This chain is Kappa-theraphotoxin-Gr2b, found in Grammostola rosea (Chilean rose tarantula).